The primary structure comprises 555 residues: Methyl-coenzyme M reductase subunit alpha (555 aa).

Q152 serves as a coordination point for coenzyme F430. Coenzyme B-binding positions include R230, 261–262 (KH), and R275. Coenzyme M is bound by residues Y337 and Y448.

This sequence belongs to the methyl-coenzyme M reductase alpha subunit family. As to quaternary structure, MCR is a hexamer of two alpha, two beta, and two gamma chains, forming a dimer of heterotrimers. The cofactor is coenzyme F430.

The protein localises to the cytoplasm. The catalysed reaction is coenzyme B + methyl-coenzyme M = methane + coenzyme M-coenzyme B heterodisulfide. It functions in the pathway one-carbon metabolism; methyl-coenzyme M reduction; methane from methyl-coenzyme M: step 1/1. In terms of biological role, component of the methyl-coenzyme M reductase (MCR) I that catalyzes the reductive cleavage of methyl-coenzyme M (CoM-S-CH3 or 2-(methylthio)ethanesulfonate) using coenzyme B (CoB or 7-mercaptoheptanoylthreonine phosphate) as reductant which results in the production of methane and the mixed heterodisulfide of CoB and CoM (CoM-S-S-CoB). This is the final step in methanogenesis. The sequence is that of Methyl-coenzyme M reductase subunit alpha (mcrA) from Methanococcus voltae.